The chain runs to 465 residues: MAP kinase-interacting serine/threonine-protein kinase 1 (465 aa).

A compositionally biased stretch (basic and acidic residues) spans Met-1 to Ile-11. Residues Met-1–Leu-40 form a disordered region. Ser-39 is subject to Phosphoserine. Positions Lys-49–Val-374 constitute a Protein kinase domain. Residues Leu-55–Val-63 and Lys-78 each bind ATP. Over residues Ala-185–Gly-203 the composition is skewed to polar residues. The interval Ala-185–Thr-204 is disordered. The Proton acceptor role is filled by Asp-211. Phosphoserine occurs at positions 221 and 226. Thr-250, Thr-255, and Thr-385 each carry phosphothreonine. A disordered region spans residues Arg-446–Leu-465. The span at Arg-455 to Leu-465 shows a compositional bias: basic and acidic residues. Position 460 is a phosphoserine (Ser-460).

This sequence belongs to the protein kinase superfamily. CAMK Ser/Thr protein kinase family. Interacts with the C-terminal regions of EIF4G1 and EIF4G2. Also binds to dephosphorylated ERK1 and ERK2, and to the p38 kinases. Requires Mg(2+) as cofactor. Post-translationally, dual phosphorylation of Thr-250 and Thr-255 activates the kinase. Phosphorylation of Thr-385 activates the kinase. MAPK3/ERK1 is one of the kinases which activate MKNK1/MNK1. Phosphorylation by PAK2 leads to a reduced phosphorylation of EIF4G1. Ubiquitous.

Its subcellular location is the cytoplasm. It is found in the nucleus. It carries out the reaction L-seryl-[protein] + ATP = O-phospho-L-seryl-[protein] + ADP + H(+). The catalysed reaction is L-threonyl-[protein] + ATP = O-phospho-L-threonyl-[protein] + ADP + H(+). With respect to regulation, phosphorylated and activated by the p38 kinases and kinases in the Erk pathway. In terms of biological role, may play a role in the response to environmental stress and cytokines. Appears to regulate translation by phosphorylating EIF4E, thus increasing the affinity of this protein for the 7-methylguanosine-containing mRNA cap. The polypeptide is MAP kinase-interacting serine/threonine-protein kinase 1 (MKNK1) (Homo sapiens (Human)).